The following is a 310-amino-acid chain: Putative S-adenosyl-L-methionine-dependent methyltransferase MAB_4587c (310 aa).

S-adenosyl-L-methionine-binding positions include Asp126 and 155 to 156 (DL).

Belongs to the UPF0677 family.

Functionally, exhibits S-adenosyl-L-methionine-dependent methyltransferase activity. This chain is Putative S-adenosyl-L-methionine-dependent methyltransferase MAB_4587c, found in Mycobacteroides abscessus (strain ATCC 19977 / DSM 44196 / CCUG 20993 / CIP 104536 / JCM 13569 / NCTC 13031 / TMC 1543 / L948) (Mycobacterium abscessus).